Reading from the N-terminus, the 2073-residue chain is Fatty acid synthase subunit beta (2073 aa).

An acetyltransferase region spans residues 1–459 (MVEAEQVHQS…VYSTDDAGDL (459 aa)). The For acetyltransferase activity role is filled by serine 270. Residues 470–858 (ALAVMITEKV…TRGIMFWKEL (389 aa)) are enoyl reductase. A Phosphoserine modification is found at serine 1122. The dehydratase stretch occupies residues 1155–1644 (GPEYTWFRAI…LPNTELITKL (490 aa)). The active-site For dehydratase activity is the histidine 1361. The 110-residue stretch at 1558-1667 (PVFVTPPTNS…VEVLNQETSE (110 aa)) folds into the MaoC-like domain. Positions 1645–2073 (SHTGMINGRK…LQNWDEYESS (429 aa)) are malonyl/palmitoyl transferase. The For malonyltransferase activity role is filled by serine 1828. Position 2073 is a phosphoserine (serine 2073).

The protein belongs to the fungal fatty acid synthetase subunit beta family. In terms of assembly, [Alpha(6)beta(6)] hexamers of two multifunctional subunits (alpha and beta).

The catalysed reaction is acetyl-CoA + n malonyl-CoA + 2n NADPH + 4n H(+) = a long-chain-acyl-CoA + n CoA + n CO2 + 2n NADP(+).. It catalyses the reaction holo-[ACP] + acetyl-CoA = acetyl-[ACP] + CoA. It carries out the reaction holo-[ACP] + malonyl-CoA = malonyl-[ACP] + CoA. The enzyme catalyses a (3R)-hydroxyacyl-[ACP] = a (2E)-enoyl-[ACP] + H2O. The catalysed reaction is a 2,3-saturated acyl-[ACP] + NAD(+) = a (2E)-enoyl-[ACP] + NADH + H(+). It catalyses the reaction (9Z)-octadecenoyl-[ACP] + H2O = (9Z)-octadecenoate + holo-[ACP] + H(+). Functionally, fatty acid synthetase catalyzes the formation of long-chain fatty acids from acetyl-CoA, malonyl-CoA and NADPH. The beta subunit contains domains for: [acyl-carrier-protein] acetyltransferase and malonyltransferase, S-acyl fatty acid synthase thioesterase, enoyl-[acyl-carrier-protein] reductase, and 3-hydroxypalmitoyl-[acyl-carrier-protein] dehydratase. This is Fatty acid synthase subunit beta (fas1) from Schizosaccharomyces pombe (strain 972 / ATCC 24843) (Fission yeast).